We begin with the raw amino-acid sequence, 213 residues long: Large ribosomal subunit protein uL1 (213 aa).

The protein belongs to the universal ribosomal protein uL1 family. In terms of assembly, part of the 50S ribosomal subunit.

In terms of biological role, binds directly to 23S rRNA. Probably involved in E site tRNA release. Its function is as follows. Protein L1 is also a translational repressor protein, it controls the translation of its operon by binding to its mRNA. This Methanococcus voltae protein is Large ribosomal subunit protein uL1.